The following is a 489-amino-acid chain: uncharacterized protein (489 aa).

A run of 12 helical transmembrane segments spans residues 14–34 (LLFV…ISLF), 36–56 (LGPF…IVTL), 100–120 (IIGP…FSGI), 127–147 (LVNT…LAFI), 158–178 (LIAL…IVAI), 203–223 (EISF…YAGV), 241–261 (ILIV…IILN), 286–306 (AAGL…NVST), 344–364 (IWFT…IPLV), 380–400 (VGSA…FKFI), 419–439 (LFCL…FPVI), and 449–469 (HTLT…LFLL).

It to M.genitalium MG226.

The protein localises to the cell membrane. This is an uncharacterized protein from Mycoplasma genitalium (strain ATCC 33530 / DSM 19775 / NCTC 10195 / G37) (Mycoplasmoides genitalium).